Here is a 467-residue protein sequence, read N- to C-terminus: Gamma-aminobutyric acid receptor subunit gamma-2 (467 aa).

Residues 1 to 39 form the signal peptide; it reads MSSPNIWSTGSSVYSTPVFSQKMTVWILLLLSLYPGFTS. Residues 40-275 lie on the Extracellular side of the membrane; that stretch reads QKSDDDYEDY…FDLSRRMGYF (236 aa). N52 and N129 each carry an N-linked (GlcNAc...) asparagine glycan. Residues C190 and C204 are joined by a disulfide bond. An N-linked (GlcNAc...) asparagine glycan is attached at N247. Residues 276 to 296 traverse the membrane as a helical segment; sequence TIQTYIPCTLIVVLSWVSFWI. At 297–302 the chain is on the cytoplasmic side; sequence NKDAVP. The helical transmembrane segment at 303–322 threads the bilayer; sequence ARTSLGITTVLTMTTLSTIA. The Extracellular segment spans residues 323–334; that stretch reads RKSLPKVSYVTA. The chain crosses the membrane as a helical span at residues 335–359; sequence MDLFVSVCFIFVFSALVEYGTLHYF. The Cytoplasmic portion of the chain corresponds to 360–443; that stretch reads VSNRKPSKDK…IHIRIAKMDS (84 aa). Residues 425–442 form an interaction with GABARAP region; that stretch reads RTGAWRHGRIHIRIAKMD. The chain crosses the membrane as a helical span at residues 444–464; sequence YARIFFPTAFCLFNLVYWVSY. The Extracellular portion of the chain corresponds to 465 to 467; sequence LYL.

Belongs to the ligand-gated ion channel (TC 1.A.9) family. Gamma-aminobutyric acid receptor (TC 1.A.9.5) subfamily. GABRG2 sub-subfamily. Heteropentamer, formed by a combination of alpha (GABRA1-6), beta (GABRB1-3), gamma (GABRG1-3), delta (GABRD), epsilon (GABRE), rho (GABRR1-3), pi (GABRP) and theta (GABRQ) chains, each subunit exhibiting distinct physiological and pharmacological properties. Interacts with GABARAP. Interacts with KIF21B. Identified in a complex of 720 kDa composed of LHFPL4, NLGN2, GABRA1, GABRB2, GABRG2 and GABRB3. Interacts with LHFPL4. Interacts with SHISA7; interaction leads to the regulation of GABA(A) receptor trafficking, channel deactivation kinetics and pharmacology. In terms of processing, palmitoylated by ZDHHC3/GODZ; required for the accumulation of GABA(A) receptors at the postsynaptic membrane of inhibitory GABAergic synapses. Post-translationally, glycosylated.

Its subcellular location is the postsynaptic cell membrane. It is found in the cell membrane. It localises to the cell projection. The protein resides in the dendrite. The protein localises to the cytoplasmic vesicle membrane. It carries out the reaction chloride(in) = chloride(out). With respect to regulation, allosterically activated by benzodiazepines. Activated by pentobarbital. Inhibited by the antagonist bicuculline. Inhibited by zinc ions. Potentiated by histamine. Gamma subunit of the heteropentameric ligand-gated chloride channel gated by gamma-aminobutyric acid (GABA), a major inhibitory neurotransmitter in the brain. GABA-gated chloride channels, also named GABA(A) receptors (GABAAR), consist of five subunits arranged around a central pore and contain GABA active binding site(s) located at the alpha and beta subunit interface(s). When activated by GABA, GABAARs selectively allow the flow of chloride anions across the cell membrane down their electrochemical gradient. Gamma-2/GABRG2-containing GABAARs are found at both synaptic and extrasynaptic sites. Chloride influx into the postsynaptic neuron following GABAAR opening decreases the neuron ability to generate a new action potential, thereby reducing nerve transmission. GABAARs containing alpha-1 and beta-2 or -3 subunits exhibit synaptogenic activity; the gamma-2 subunit being necessary but not sufficient to induce rapid synaptic contacts formation. Extrasynaptic gamma-2-containing receptors contribute to the tonic GABAergic inhibition. GABAARs function also as histamine receptor where histamine binds at the interface of two neighboring beta subunits and potentiates GABA response in a gamma-2 subunit-controlled manner. The polypeptide is Gamma-aminobutyric acid receptor subunit gamma-2 (GABRG2) (Pongo abelii (Sumatran orangutan)).